A 463-amino-acid chain; its full sequence is Ribulose bisphosphate carboxylase large chain (463 aa).

Residue Lys-5 is modified to N6,N6,N6-trimethyllysine. Residues Asn-114 and Thr-164 each contribute to the substrate site. Lys-166 acts as the Proton acceptor in catalysis. Lys-168 is a binding site for substrate. Mg(2+) contacts are provided by Lys-192, Asp-194, and Glu-195. At Lys-192 the chain carries N6-carboxylysine. Catalysis depends on His-285, which acts as the Proton acceptor. Arg-286, His-318, and Ser-370 together coordinate substrate.

This sequence belongs to the RuBisCO large chain family. Type I subfamily. In terms of assembly, heterohexadecamer of 8 large chains and 8 small chains; disulfide-linked. The disulfide link is formed within the large subunit homodimers. It depends on Mg(2+) as a cofactor. Post-translationally, the disulfide bond which can form in the large chain dimeric partners within the hexadecamer appears to be associated with oxidative stress and protein turnover.

The protein resides in the plastid. It localises to the chloroplast. It catalyses the reaction 2 (2R)-3-phosphoglycerate + 2 H(+) = D-ribulose 1,5-bisphosphate + CO2 + H2O. The enzyme catalyses D-ribulose 1,5-bisphosphate + O2 = 2-phosphoglycolate + (2R)-3-phosphoglycerate + 2 H(+). RuBisCO catalyzes two reactions: the carboxylation of D-ribulose 1,5-bisphosphate, the primary event in carbon dioxide fixation, as well as the oxidative fragmentation of the pentose substrate in the photorespiration process. Both reactions occur simultaneously and in competition at the same active site. The polypeptide is Ribulose bisphosphate carboxylase large chain (Pelargonium grandiflorum (Geranium)).